A 360-amino-acid polypeptide reads, in one-letter code: MKASIISKLESLKERHEELEALLGESSVINDQDKFRAYSKEYAQLEDVVKCFARWNWLNNNIEETQLLLDDPDMKEMAELEIEESKAEIENAEQQLQILLLPKDPNDEYNAYLEIRAGTGGDEAGIFAGDLFRMYSRYAESKRWRVEVLNANESEQGGYKEIIVKVNGEGVYGQLKFESGGHRVQRVPKTESQGRIHTSACTVAVMPELPENEMPEINPSDLRIDTYRSSGAGGQHVNTTDSAVRITHIPTGIVVECQDERSQHKNKAKALSVLASRIAQAEQERQAQAQADTRRNLLGSGDRSDKIRTYNYPQGRVTDHRINLTVYRLDEVMNGKIDELIQPIITEYQADQLAMLSEQN.

Position 235 is an N5-methylglutamine (glutamine 235). The interval glutamine 286–asparagine 311 is disordered.

This sequence belongs to the prokaryotic/mitochondrial release factor family. Methylated by PrmC. Methylation increases the termination efficiency of RF1.

The protein resides in the cytoplasm. In terms of biological role, peptide chain release factor 1 directs the termination of translation in response to the peptide chain termination codons UAG and UAA. In Histophilus somni (strain 2336) (Haemophilus somnus), this protein is Peptide chain release factor 1.